The chain runs to 359 residues: UPF0283 membrane protein RL2646 (359 aa).

A disordered region spans residues Met-1–Thr-48. Residues Thr-23–Ser-42 show a composition bias toward basic and acidic residues. The next 2 membrane-spanning stretches (helical) occupy residues Phe-77–Thr-97 and Leu-111–Ile-131.

Belongs to the UPF0283 family.

The protein resides in the cell inner membrane. This chain is UPF0283 membrane protein RL2646, found in Rhizobium johnstonii (strain DSM 114642 / LMG 32736 / 3841) (Rhizobium leguminosarum bv. viciae).